The primary structure comprises 791 residues: Biofilm architecture maintenance protein MbaA (791 aa).

The first 23 residues, 1-23 (MKLNHRILLLIAPVILLSAAASS), serve as a signal peptide directing secretion. Topologically, residues 24–259 (YIIYTSQKNA…NAQLHSIQRE (236 aa)) are periplasmic. Residues 260-280 (LLLSFGVSALVTVLMLLLLLY) form a helical membrane-spanning segment. The 53-residue stretch at 281 to 333 (RHVINPILHLDKQLEEVENNQRKNIEKLNTDDEIGRLSSRFYAMYSELHSTYQ) folds into the HAMP domain. Over 281 to 791 (RHVINPILHL…FTEPSQSECR (511 aa)) the chain is Cytoplasmic. In terms of domain architecture, GGDEF spans 368–509 (QHIWVMYIDL…GKNQVAYYSQ (142 aa)). An EAL domain is found at 518–769 (RNNIERALRL…EISPWLHASN (252 aa)).

Its subcellular location is the cell inner membrane. Plays an essential role in the maintenance and the formation of the three-dimensional structure of the biofilms at the later stages of their development. Absence of mbaA promotes the accumulation of larger amount of biomass on the surfaces at later stage of development, results in the overproduction of an extracellular polymeric substance that accumulates in the matrix of biofilms. This yields biofilms lacking the typical structure consisting of pillars of cells separated by fluid filled channels. This chain is Biofilm architecture maintenance protein MbaA (mbaA), found in Vibrio cholerae serotype O1 (strain ATCC 39315 / El Tor Inaba N16961).